We begin with the raw amino-acid sequence, 435 residues long: Methionine aminopeptidase 2 (435 aa).

The disordered stretch occupies residues 57-77; it reads AIDGDQAAAKKKKSKKKKKKA. The segment covering 65–77 has biased composition (basic residues); the sequence is AKKKKSKKKKKKA. A substrate-binding site is contributed by His-188. A divalent metal cation-binding residues include Asp-208, Asp-219, and His-288. His-296 serves as a coordination point for substrate. Residues Glu-321 and Glu-416 each coordinate a divalent metal cation.

The protein belongs to the peptidase M24A family. Methionine aminopeptidase eukaryotic type 2 subfamily. Co(2+) is required as a cofactor. Requires Zn(2+) as cofactor. Mn(2+) serves as cofactor. It depends on Fe(2+) as a cofactor.

The protein resides in the cytoplasm. The catalysed reaction is Release of N-terminal amino acids, preferentially methionine, from peptides and arylamides.. Its function is as follows. Cotranslationally removes the N-terminal methionine from nascent proteins. The N-terminal methionine is often cleaved when the second residue in the primary sequence is small and uncharged (Met-Ala-, Cys, Gly, Pro, Ser, Thr, or Val). The sequence is that of Methionine aminopeptidase 2 from Clavispora lusitaniae (strain ATCC 42720) (Yeast).